The chain runs to 481 residues: uncharacterized protein (481 aa).

It to M.tuberculosis RV2411c.

This is an uncharacterized protein from Synechocystis sp. (strain ATCC 27184 / PCC 6803 / Kazusa).